The sequence spans 600 residues: Threonine dehydratase, mitochondrial (600 aa).

Lys144 is modified (N6-(pyridoxal phosphate)lysine). ACT-like domains lie at 425–497 (VFLS…DISD) and 519–590 (RLYR…DETN).

The protein belongs to the serine/threonine dehydratase family. As to quaternary structure, homotetramer. Pyridoxal 5'-phosphate serves as cofactor.

The protein resides in the mitochondrion. The protein localises to the cytoplasm. It carries out the reaction L-threonine = 2-oxobutanoate + NH4(+). It participates in amino-acid biosynthesis; L-isoleucine biosynthesis; 2-oxobutanoate from L-threonine: step 1/1. With respect to regulation, isoleucine allosterically inhibits while valine allosterically activates this enzyme. In Schizosaccharomyces pombe (strain 972 / ATCC 24843) (Fission yeast), this protein is Threonine dehydratase, mitochondrial.